Consider the following 277-residue polypeptide: uncharacterized protein (277 aa).

It belongs to the BtpA family.

It is found in the mitochondrion. This is an uncharacterized protein from Caenorhabditis elegans.